The sequence spans 256 residues: Phosphonates import ATP-binding protein PhnC (256 aa).

In terms of domain architecture, ABC transporter spans 3–247; that stretch reads LELKNISKTY…VLHKEIFTNV (245 aa). 36–43 lines the ATP pocket; the sequence is GLSGAGKS.

Belongs to the ABC transporter superfamily. Phosphonates importer (TC 3.A.1.9.1) family. The complex is composed of two ATP-binding proteins (PhnC), two transmembrane proteins (PhnE) and a solute-binding protein (PhnD).

The protein resides in the cell inner membrane. The catalysed reaction is phosphonate(out) + ATP + H2O = phosphonate(in) + ADP + phosphate + H(+). Its function is as follows. Part of the ABC transporter complex PhnCDE involved in phosphonates import. Responsible for energy coupling to the transport system. The chain is Phosphonates import ATP-binding protein PhnC from Treponema denticola (strain ATCC 35405 / DSM 14222 / CIP 103919 / JCM 8153 / KCTC 15104).